Consider the following 316-residue polypeptide: GTP cyclohydrolase FolE2 1 (316 aa).

Belongs to the GTP cyclohydrolase IV family.

It carries out the reaction GTP + H2O = 7,8-dihydroneopterin 3'-triphosphate + formate + H(+). It functions in the pathway cofactor biosynthesis; 7,8-dihydroneopterin triphosphate biosynthesis; 7,8-dihydroneopterin triphosphate from GTP: step 1/1. Functionally, converts GTP to 7,8-dihydroneopterin triphosphate. This is GTP cyclohydrolase FolE2 1 from Burkholderia lata (strain ATCC 17760 / DSM 23089 / LMG 22485 / NCIMB 9086 / R18194 / 383).